A 296-amino-acid polypeptide reads, in one-letter code: Acetylglutamate kinase (296 aa).

Residues 65 to 66 (GG), Arg87, and Asn190 each bind substrate.

Belongs to the acetylglutamate kinase family. ArgB subfamily.

It is found in the cytoplasm. It catalyses the reaction N-acetyl-L-glutamate + ATP = N-acetyl-L-glutamyl 5-phosphate + ADP. The protein operates within amino-acid biosynthesis; L-arginine biosynthesis; N(2)-acetyl-L-ornithine from L-glutamate: step 2/4. Its function is as follows. Catalyzes the ATP-dependent phosphorylation of N-acetyl-L-glutamate. This Moorella thermoacetica (strain ATCC 39073 / JCM 9320) protein is Acetylglutamate kinase.